Consider the following 233-residue polypeptide: Octanoyltransferase (233 aa).

The region spanning 36 to 211 (DTTPDEIWLV…EFTRQLGYPT (176 aa)) is the BPL/LPL catalytic domain. Substrate-binding positions include 75–82 (RGGQVTYH), 142–144 (SLG), and 155–157 (GLA). Cysteine 173 functions as the Acyl-thioester intermediate in the catalytic mechanism.

It belongs to the LipB family.

The protein resides in the cytoplasm. The catalysed reaction is octanoyl-[ACP] + L-lysyl-[protein] = N(6)-octanoyl-L-lysyl-[protein] + holo-[ACP] + H(+). Its pathway is protein modification; protein lipoylation via endogenous pathway; protein N(6)-(lipoyl)lysine from octanoyl-[acyl-carrier-protein]: step 1/2. Its function is as follows. Catalyzes the transfer of endogenously produced octanoic acid from octanoyl-acyl-carrier-protein onto the lipoyl domains of lipoate-dependent enzymes. Lipoyl-ACP can also act as a substrate although octanoyl-ACP is likely to be the physiological substrate. This is Octanoyltransferase from Yersinia pseudotuberculosis serotype O:3 (strain YPIII).